We begin with the raw amino-acid sequence, 247 residues long: LHFPL tetraspan subfamily member 4 protein (247 aa).

4 helical membrane-spanning segments follow: residues 22 to 42 (IGVLWAIFTICFAIINVVVFI), 97 to 117 (FFVLLSMVLILGCITCFALFF), 127 to 147 (ICAWMQLLAALCLVLGCMIFP), and 178 to 198 (ILAIIGILNALILSFLAFVLG).

It belongs to the LHFP family. In terms of assembly, interacts with GABA(A) receptor subunits. Interacts with GABRB3. Interacts with GABRA2. Interacts with GABRG2. Identified in a complex of 720 kDa composed of LHFPL4, NLGN2, GABRA1, GABRB2, GABRG2 and GABRB3. Interacts with GABRA1. Interacts with NLGN2; leading to mutual regulation of protein level and synaptic clustering.

It is found in the cell projection. Its subcellular location is the dendrite. It localises to the postsynaptic cell membrane. Functionally, plays a role in the regulation of inhibitory synapse formation and function by being involved in maintening gamma-aminobutyric acid receptors (GABAARs) clustering and their associated scaffold proteins at inhibitory synaptic sites. Acts in concert with NLGN2 to recruit or stabilize GABAARs. This chain is LHFPL tetraspan subfamily member 4 protein, found in Bos taurus (Bovine).